The primary structure comprises 343 residues: tRNA N6-adenosine threonylcarbamoyltransferase (343 aa).

2 residues coordinate Fe cation: H111 and H115. Residues 133 to 137 (AVSGG), D166, G179, D183, and N273 contribute to the substrate site. Fe cation is bound at residue D301.

This sequence belongs to the KAE1 / TsaD family. The cofactor is Fe(2+).

The protein localises to the cytoplasm. The catalysed reaction is L-threonylcarbamoyladenylate + adenosine(37) in tRNA = N(6)-L-threonylcarbamoyladenosine(37) in tRNA + AMP + H(+). Required for the formation of a threonylcarbamoyl group on adenosine at position 37 (t(6)A37) in tRNAs that read codons beginning with adenine. Is involved in the transfer of the threonylcarbamoyl moiety of threonylcarbamoyl-AMP (TC-AMP) to the N6 group of A37, together with TsaE and TsaB. TsaD likely plays a direct catalytic role in this reaction. This is tRNA N6-adenosine threonylcarbamoyltransferase from Geotalea uraniireducens (strain Rf4) (Geobacter uraniireducens).